Here is a 206-residue protein sequence, read N- to C-terminus: Ribosomal RNA large subunit methyltransferase E (206 aa).

Gly-60, Trp-62, Asp-80, Asp-96, and Asp-121 together coordinate S-adenosyl-L-methionine. Residue Lys-161 is the Proton acceptor of the active site.

Belongs to the class I-like SAM-binding methyltransferase superfamily. RNA methyltransferase RlmE family.

The protein localises to the cytoplasm. The enzyme catalyses uridine(2552) in 23S rRNA + S-adenosyl-L-methionine = 2'-O-methyluridine(2552) in 23S rRNA + S-adenosyl-L-homocysteine + H(+). Its function is as follows. Specifically methylates the uridine in position 2552 of 23S rRNA at the 2'-O position of the ribose in the fully assembled 50S ribosomal subunit. The protein is Ribosomal RNA large subunit methyltransferase E of Nitrosomonas eutropha (strain DSM 101675 / C91 / Nm57).